The sequence spans 333 residues: Procathepsin L (333 aa).

Positions 1 to 17 (MNPTLILAAFCLGIASA) are cleaved as a signal peptide. The propeptide at 18 to 113 (TLTFDHSLEA…KVFQEPLFYE (96 aa)) is activation peptide. Glutamate 122 lines the Zn(2+) pocket. Disulfide bonds link cysteine 135/cysteine 178 and cysteine 169/cysteine 211. Cysteine 138 is a catalytic residue. Zn(2+) is bound by residues glutamate 163, aspartate 184, glutamate 199, glutamate 205, and glutamate 209. N-linked (GlcNAc...) asparagine glycosylation occurs at asparagine 221. Positions 227, 250, 253, 273, and 275 each coordinate Zn(2+). A disulfide bridge connects residues cysteine 269 and cysteine 322. Histidine 276 is a catalytic residue. A propeptide spanning residues 289 to 291 (ESD) is cleaved from the precursor. Residue asparagine 300 is part of the active site.

The protein belongs to the peptidase C1 family. As to quaternary structure, dimer of a heavy and a light chain linked by disulfide bonds. Interacts with Long isoform of CD74/Ii chain; the interaction stabilizes the conformation of mature CTSL. In terms of processing, during export along the endocytic pathway, pro-CTSL undergoes several proteolytic cleavages to generate the CTSL single-chain and two-chain mature forms, composed of a heavy chain linked to a light chain by disulfide bonds. Autocleavage; produces the single-chain CTSL after cleavage of the propeptide. The cleavage can be intermolecular.

It is found in the lysosome. The protein resides in the apical cell membrane. It localises to the cytoplasmic vesicle. The protein localises to the secretory vesicle. Its subcellular location is the chromaffin granule. It is found in the secreted. The protein resides in the extracellular space. It localises to the nucleus. It carries out the reaction Specificity close to that of papain. As compared to cathepsin B, cathepsin L exhibits higher activity toward protein substrates, but has little activity on Z-Arg-Arg-NHMec, and no peptidyl-dipeptidase activity.. Inhibited by the propeptide produced by autocleavage. Long isoform of CD74/Ii chain stabilizes the conformation of mature CTSL by binding to its active site and serving as a chaperone to help maintain a pool of mature enzyme in endocytic compartments and extracellular space of APCs. IFNG enhances the conversion into the CTSL mature and active form. Inhibited by CST6. Inhibited by the glycopeptide antibiotic teicoplanin. Inhibited by amantadine. Thiol protease important for the overall degradation of proteins in lysosomes. Plays a critical for normal cellular functions such as general protein turnover, antigen processing and bone remodeling. Involved in the solubilization of cross-linked TG/thyroglobulin and in the subsequent release of thyroid hormone thyroxine (T4) by limited proteolysis of TG/thyroglobulin in the thyroid follicle lumen. In neuroendocrine chromaffin cells secretory vesicles, catalyzes the prohormone proenkephalin processing to the active enkephalin peptide neurotransmitter. In thymus, regulates CD4(+) T cell positive selection by generating the major histocompatibility complex class II (MHCII) bound peptide ligands presented by cortical thymic epithelial cells. Also mediates invariant chain processing in cortical thymic epithelial cells. Major elastin-degrading enzyme at neutral pH. Accumulates as a mature and active enzyme in the extracellular space of antigen presenting cells (APCs) to regulate degradation of the extracellular matrix in the course of inflammation. Secreted form generates endostatin from COL18A1. Critical for cardiac morphology and function. Plays an important role in hair follicle morphogenesis and cycling, as well as epidermal differentiation. Required for maximal stimulation of steroidogenesis by TIMP1. In terms of biological role, (Microbial infection) In cells lacking TMPRSS2 expression, facilitates human coronaviruses SARS-CoV and SARS-CoV-2 infections via a slow acid-activated route with the proteolysis of coronavirus spike (S) glycoproteins in lysosome for entry into host cell. Proteolysis within lysosomes is sufficient to activate membrane fusion by coronaviruses SARS-CoV and EMC (HCoV-EMC) S as well as Zaire ebolavirus glycoproteins. Its function is as follows. Functions in the regulation of cell cycle progression through proteolytic processing of the CUX1 transcription factor. Translation initiation at downstream start sites allows the synthesis of isoforms that are devoid of a signal peptide and localize to the nucleus where they cleave the CUX1 transcription factor and modify its DNA binding properties. The chain is Procathepsin L from Homo sapiens (Human).